The following is a 778-amino-acid chain: MSNHHSKTKKTSMLGREDYIYSHDITNKNKKEKLNGASKNNDYNQDDDDETMKSKMMDFCDKTTAHGAKRVLIARNSFSKLMWGLIIFSFLLMFAYQASKLIFKFSAHEKITDISLKFDDVEFPAITFCNLNPYKKSLVMMVPSIRDTMDVYDNAKTHSKSEGEKKKPKVSRKQHSDASQQMVRELFAKEIEEGMVELKKSNKTLQSQNKSGRRRSQRSIENRRYEAIEAHCKCVGNIGMECIRFESPPRDPSSKCICTYDRDMEVAWPCFNISVWYDHECPLCHDDGYCESTLPSGTTSSDKWPCMCRNRGDTSERDDTPYCIGKAGVGKIEIRKLWLENNMTTTSTTTTTTTTPPPTTTSTTTTTTTTPPPTTTARPNQRAIVSNPETIKAMGFQGMTDGVAMLTRAKENLMFTMAALSDKQRIALSQSKHEFIEMCSFNGKECDIDEDFRLHVDPEFGNCFTFNYDVNNNYTSSRAGPMYGIRVLLFVNTSDYMSTSESSGVRLAIHPPTEYPFPDTFGYSAPVGFASSFGIKKKVMQRLPAPYGECVETKKVVDRNYIYAGYDYHPEGCHRSCFQNGLIDDCSCGDPRFPVPEGYRHCSAFNATARTCLEKNIGSVGDFHHITQKMDKCVCKQSCEEIIHEVTFSCSKWPSGATDLGDCDGMTESECEQYYRLNAAMIEVFYEQLNYELLQESEAYGLVNLIADFGGHLGLWLGFSVITVMEVCVLLVDMISLFFKSRHEEKLLRQSTKRKDVPEDKRQITVGSGRKSDAFVSI.

Residues 1 to 82 (MSNHHSKTKK…IARNSFSKLM (82 aa)) are Cytoplasmic-facing. A helical membrane pass occupies residues 83–103 (WGLIIFSFLLMFAYQASKLIF). At 104–711 (KFSAHEKITD…LVNLIADFGG (608 aa)) the chain is on the extracellular side. The span at 154-165 (NAKTHSKSEGEK) shows a compositional bias: basic and acidic residues. Disordered regions lie at residues 154-180 (NAKTHSKSEGEKKKPKVSRKQHSDASQ) and 201-220 (SNKTLQSQNKSGRRRSQRSI). N-linked (GlcNAc...) asparagine glycans are attached at residues N202, N209, N272, and N342. Low complexity predominate over residues 346–369 (TSTTTTTTTTPPPTTTSTTTTTTT). Residues 346 to 380 (TSTTTTTTTTPPPTTTSTTTTTTTTPPPTTTARPN) form a disordered region. Residues N473, N492, and N606 are each glycosylated (N-linked (GlcNAc...) asparagine). Residues 712-732 (HLGLWLGFSVITVMEVCVLLV) traverse the membrane as a helical segment. The Cytoplasmic segment spans residues 733–778 (DMISLFFKSRHEEKLLRQSTKRKDVPEDKRQITVGSGRKSDAFVSI).

The protein belongs to the amiloride-sensitive sodium channel (TC 1.A.6) family.

The protein resides in the membrane. In terms of biological role, probable sodium channel subunit. Required by a subset of neurons. The polypeptide is Degenerin deg-1 (Caenorhabditis elegans).